Here is a 288-residue protein sequence, read N- to C-terminus: Heme oxygenase 1 (288 aa).

The Cytoplasmic portion of the chain corresponds to 1-265 (MERPQPDSMP…KTPLNTHSQA (265 aa)). Residues lysine 18, histidine 25, tyrosine 134, and arginine 183 each contribute to the heme b site. Residues 223–260 (HDTKDQSPSRAPGLRQRASNKAQDSAPVETPRGKTPLN) are disordered. Serine 229 bears the Phosphoserine mark. Residues 266–288 (PLLRWVLTLSFLVATVAVGLYAM) traverse the membrane as a helical; Anchor for type IV membrane protein segment.

The protein belongs to the heme oxygenase family. Homodimer and higher order homooligomer. Oligomerization is crucial for its stability and function in the endoplasmic reticulum. Interacts with FLVCR2; this interaction is potentiated in the presence of heme. Post-translationally, a soluble form arises by proteolytic removal of the membrane anchor.

The protein localises to the endoplasmic reticulum membrane. The catalysed reaction is heme b + 3 reduced [NADPH--hemoprotein reductase] + 3 O2 = biliverdin IXalpha + CO + Fe(2+) + 3 oxidized [NADPH--hemoprotein reductase] + 3 H2O + H(+). Catalyzes the oxidative cleavage of heme at the alpha-methene bridge carbon, released as carbon monoxide (CO), to generate biliverdin IXalpha, while releasing the central heme iron chelate as ferrous iron. Affords protection against programmed cell death and this cytoprotective effect relies on its ability to catabolize free heme and prevent it from sensitizing cells to undergo apoptosis. Its function is as follows. Catalyzes the oxidative cleavage of heme at the alpha-methene bridge carbon, released as carbon monoxide (CO), to generate biliverdin IXalpha, while releasing the central heme iron chelate as ferrous iron. This is Heme oxygenase 1 (HMOX1) from Pongo abelii (Sumatran orangutan).